The sequence spans 332 residues: DNA-directed RNA polymerase subunit alpha (332 aa).

The tract at residues methionine 1–glutamate 232 is alpha N-terminal domain (alpha-NTD). Residues isoleucine 247–glycine 332 form an alpha C-terminal domain (alpha-CTD) region.

This sequence belongs to the RNA polymerase alpha chain family. In terms of assembly, homodimer. The RNAP catalytic core consists of 2 alpha, 1 beta, 1 beta' and 1 omega subunit. When a sigma factor is associated with the core the holoenzyme is formed, which can initiate transcription.

It catalyses the reaction RNA(n) + a ribonucleoside 5'-triphosphate = RNA(n+1) + diphosphate. Its function is as follows. DNA-dependent RNA polymerase catalyzes the transcription of DNA into RNA using the four ribonucleoside triphosphates as substrates. This is DNA-directed RNA polymerase subunit alpha from Halorhodospira halophila (strain DSM 244 / SL1) (Ectothiorhodospira halophila (strain DSM 244 / SL1)).